The sequence spans 1116 residues: uncharacterized protein (1116 aa).

EF-hand domains lie at 8 to 43, 42 to 77, 166 to 201, and 292 to 327; these read EEQT…SGLA, LAPQ…VALA, LSTE…INLL, and LPED…IKLK. 3 consecutive EH domains span residues 9–106, 134–224, and 259–348; these read EQTA…DSSK, EMTR…AAST, and DLTS…VAPL. Ca(2+)-binding residues include Asp305, Asn307, Asn309, Lys311, and Glu316. Disordered stretches follow at residues 360-454, 703-774, 812-890, 909-978, 1004-1024, 1044-1066, and 1095-1116; these read PSVV…NSPT, SVNL…ASTV, TSLS…NTSA, PFAT…SPQI, TTTH…ENQY, SNEV…DDEL, and QAAE…AGHH. A compositionally biased stretch (pro residues) spans 371–381; it reads NPNPTLAPNPT. The segment covering 401–416 has biased composition (polar residues); the sequence is FSPTLAPQHTSSNATK. The stretch at 565–707 forms a coiled coil; the sequence is KAQTEQVNRE…EDGLKSVNLT (143 aa). Over residues 723–749 the composition is skewed to polar residues; sequence SFTSNGITTDKPTLPDTTSSVPTQHNS. 2 stretches are compositionally biased toward low complexity: residues 755–774 and 812–827; these read NTLR…ASTV and TSLS…SLDS. Polar residues predominate over residues 864 to 890; that stretch reads SKLTGSARNTAEPVENTSAEPIENTSA. The segment covering 957–969 has biased composition (acidic residues); it reads EIDDDESSSDEEP. Composition is skewed to acidic residues over residues 1055 to 1066 and 1104 to 1116; these read TANESDNDDDEL and NSST…AGHH.

The protein resides in the cytoplasm. The protein localises to the cytoskeleton. This is an uncharacterized protein from Schizosaccharomyces pombe (strain 972 / ATCC 24843) (Fission yeast).